Reading from the N-terminus, the 590-residue chain is Aspartate--tRNA ligase (590 aa).

Glu180 is an L-aspartate binding site. The segment at 204 to 207 (QLFK) is aspartate. Arg226 provides a ligand contact to L-aspartate. ATP-binding positions include 226 to 228 (RDE) and Gln235. His454 provides a ligand contact to L-aspartate. Glu488 lines the ATP pocket. Arg495 is a binding site for L-aspartate. 540 to 543 (GFDR) provides a ligand contact to ATP.

The protein belongs to the class-II aminoacyl-tRNA synthetase family. Type 1 subfamily. Homodimer.

It localises to the cytoplasm. It catalyses the reaction tRNA(Asp) + L-aspartate + ATP = L-aspartyl-tRNA(Asp) + AMP + diphosphate. Functionally, catalyzes the attachment of L-aspartate to tRNA(Asp) in a two-step reaction: L-aspartate is first activated by ATP to form Asp-AMP and then transferred to the acceptor end of tRNA(Asp). In Clostridium kluyveri (strain NBRC 12016), this protein is Aspartate--tRNA ligase.